We begin with the raw amino-acid sequence, 61 residues long: MDDSIDYKDFNRRILLIVFKFALNKSTILSIVQRDHRVAIKRLNKINPDLKSSPRNASALQ.

This is an uncharacterized protein from Autographa californica nuclear polyhedrosis virus (AcMNPV).